The primary structure comprises 437 residues: Vacuolar protein sorting-associated protein 4A (437 aa).

The MIT domain occupies 2 to 80 (TTSTLQKAID…KDYLRNKEKH (79 aa)). An N6-acetyllysine modification is found at Lys8. The stretch at 15-37 (KATEEDKAKNYEEALRLYQHAVE) forms a coiled coil. Positions 75–106 (RNKEKHGKKPVKENQSEGKGSDSDSEGDNPEK) are disordered. Over residues 84 to 96 (PVKENQSEGKGSD) the composition is skewed to basic and acidic residues. Phosphoserine is present on residues Ser95 and Ser97. 167-174 (GPPGTGKS) provides a ligand contact to ATP.

The protein belongs to the AAA ATPase family. As to quaternary structure, proposed to be monomeric or homodimeric in nucleotide-free form and to oligomerize upon binding to ATP to form two stacked hexameric or heptameric rings with a central pore through which ESCRT-III substrates are translocated in an ATP-dependent manner. Interacts with CHMP1A, CHMP1B, CHMP2A, CHMP2B, CHMP3, CHMP4A, CHMP4B, CHMP4C and CHMP6. Interacts with VPS4B; the interaction suggests a heteromeric assembly with VPS4B. Interacts with SPAST. Interacts with IST1. Interacts with ZFYVE19/ANCHR; leading to retain it at midbody. In terms of tissue distribution, highly expressed in testis and moderately in heart and brain. Not detected in spleen, lung, liver, skeletal muscle or kidney.

The protein localises to the late endosome membrane. It localises to the midbody. The protein resides in the cytoplasm. Its subcellular location is the cytoskeleton. It is found in the spindle. It catalyses the reaction ATP + H2O = ADP + phosphate + H(+). Functionally, involved in late steps of the endosomal multivesicular bodies (MVB) pathway. Recognizes membrane-associated ESCRT-III assemblies and catalyzes their disassembly, possibly in combination with membrane fission. Redistributes the ESCRT-III components to the cytoplasm for further rounds of MVB sorting. MVBs contain intraluminal vesicles (ILVs) that are generated by invagination and scission from the limiting membrane of the endosome and mostly are delivered to lysosomes enabling degradation of membrane proteins, such as stimulated growth factor receptors, lysosomal enzymes and lipids. It is required for proper accomplishment of various processes including the regulation of endosome size, primary cilium organization, mitotic spindle organization and chromosome segregation, and nuclear envelope sealing and spindle disassembly during anaphase. In conjunction with the ESCRT machinery also appears to function in topologically equivalent membrane fission events, such as the terminal stages of cytokinesis. Involved in cytokinesis: retained at the midbody by ZFYVE19/ANCHR and CHMP4C until abscission checkpoint signaling is terminated at late cytokinesis. It is then released following dephosphorylation of CHMP4C, leading to abscission. VPS4A/B are required for the exosomal release of SDCBP, CD63 and syndecan. Critical for normal erythroblast cytokinesis and correct erythropoiesis. This chain is Vacuolar protein sorting-associated protein 4A, found in Mus musculus (Mouse).